The primary structure comprises 441 residues: Xylose isomerase (441 aa).

Catalysis depends on residues histidine 99 and aspartate 102. Positions 230, 266, 269, 294, 305, 307, and 337 each coordinate Mg(2+).

This sequence belongs to the xylose isomerase family. As to quaternary structure, homotetramer. It depends on Mg(2+) as a cofactor.

Its subcellular location is the cytoplasm. The enzyme catalyses alpha-D-xylose = alpha-D-xylulofuranose. Exhibits xylose isomerase activity. This chain is Xylose isomerase (xylA), found in Bacillus sp. (strain LW2).